The chain runs to 1316 residues: Tetratricopeptide repeat protein 21B (1316 aa).

19 TPR repeats span residues 108 to 141 (EKAL…SDGS), 145 to 178 (HVLK…GNDT), 180 to 211 (ALLG…FPSF), 285 to 323 (AQLF…NPQQ), 324 to 357 (SEFA…DETS), 492 to 525 (LQTV…NPSY), 563 to 596 (PLYH…PGMK), 617 to 650 (LSIF…FSGT), 722 to 755 (PRSF…NPKD), 757 to 789 (TLAS…GQKN), 791 to 822 (LCYD…EPVN), 831 to 864 (GRCQ…QARV), 884 to 917 (AEIC…CETD), 919 to 951 (KIML…DQDN), 952 to 985 (EAAT…KPDN), 1023 to 1056 (PGFQ…RDWG), 1197 to 1230 (EKSW…NRSC), 1232 to 1264 (KAYE…SNRT), and 1266 to 1299 (PAVG…HPTY).

It belongs to the TTC21 family. In terms of assembly, component of the IFT complex A (IFT-A) complex. IFT-A complex is divided into a core subcomplex composed of IFT122:IFT140:WDR19 which is associated with TULP3 and a peripheral subcomplex composed of IFT43:WDR35:TTC21B. Interacts directy with WDR35 and TTC21B. Interacts with TTC25.

The protein resides in the cytoplasm. Its subcellular location is the cytoskeleton. It localises to the cilium axoneme. Its function is as follows. Component of the IFT complex A (IFT-A), a complex required for retrograde ciliary transport and entry into cilia of G protein-coupled receptors (GPCRs). Essential for retrograde trafficking of IFT-1, IFT-B and GPCRs. Negatively modulates the SHH signal transduction. This is Tetratricopeptide repeat protein 21B from Homo sapiens (Human).